A 495-amino-acid chain; its full sequence is Acetyl-coenzyme A carboxylase carboxyl transferase subunit beta, chloroplastic (495 aa).

Positions 187 to 208 are disordered; that stretch reads ESRNSSENEGSSRRTRTKGSDL. The CoA carboxyltransferase N-terminal domain occupies 226–495; that stretch reads LWVQCENCYG…PLNQKSSKIK (270 aa). Zn(2+) contacts are provided by Cys230, Cys233, Cys249, and Cys252. The C4-type zinc finger occupies 230 to 252; sequence CENCYGLNYKKFLKSKMNICEQC.

Belongs to the AccD/PCCB family. As to quaternary structure, acetyl-CoA carboxylase is a heterohexamer composed of biotin carboxyl carrier protein, biotin carboxylase and 2 subunits each of ACCase subunit alpha and ACCase plastid-coded subunit beta (accD). It depends on Zn(2+) as a cofactor. RNA expressed in leaf, root and stem; the least expression occurs in stems.

It is found in the plastid. The protein resides in the chloroplast stroma. The enzyme catalyses N(6)-carboxybiotinyl-L-lysyl-[protein] + acetyl-CoA = N(6)-biotinyl-L-lysyl-[protein] + malonyl-CoA. The protein operates within lipid metabolism; malonyl-CoA biosynthesis; malonyl-CoA from acetyl-CoA: step 1/1. Its function is as follows. Component of the acetyl coenzyme A carboxylase (ACC) complex. Biotin carboxylase (BC) catalyzes the carboxylation of biotin on its carrier protein (BCCP) and then the CO(2) group is transferred by the transcarboxylase to acetyl-CoA to form malonyl-CoA. The sequence is that of Acetyl-coenzyme A carboxylase carboxyl transferase subunit beta, chloroplastic from Nicotiana tabacum (Common tobacco).